A 317-amino-acid polypeptide reads, in one-letter code: Transaldolase (317 aa).

The Schiff-base intermediate with substrate role is filled by Lys-132.

It belongs to the transaldolase family. Type 1 subfamily. Homodimer.

It localises to the cytoplasm. The enzyme catalyses D-sedoheptulose 7-phosphate + D-glyceraldehyde 3-phosphate = D-erythrose 4-phosphate + beta-D-fructose 6-phosphate. The protein operates within carbohydrate degradation; pentose phosphate pathway; D-glyceraldehyde 3-phosphate and beta-D-fructose 6-phosphate from D-ribose 5-phosphate and D-xylulose 5-phosphate (non-oxidative stage): step 2/3. Transaldolase is important for the balance of metabolites in the pentose-phosphate pathway. This is Transaldolase from Shewanella denitrificans (strain OS217 / ATCC BAA-1090 / DSM 15013).